Consider the following 559-residue polypeptide: DNA primase (559 aa).

Residues 37 to 61 (CPFHEERSASFSVNQIKGFYHCFGC) form a CHC2-type zinc finger. The Toprim domain maps to 246–327 (KQVIVTEGYL…RGGVILFENN (82 aa)). Residues Glu252, Asp296, and Asp298 each coordinate Mg(2+).

The protein belongs to the DnaG primase family. In terms of assembly, monomer. The C-terminal domain DnaB-binding domain exists as a dimer in solution. Interacts with DnaB via its C-terminal domain (residues 415-559 of DnaG); up to 3 DnaG fragments bind to a DnaB hexamer. The cofactor is Zn(2+). Requires Mg(2+) as cofactor.

The catalysed reaction is ssDNA + n NTP = ssDNA/pppN(pN)n-1 hybrid + (n-1) diphosphate.. In terms of biological role, RNA polymerase that catalyzes the synthesis of short RNA molecules used as primers for DNA polymerase during DNA replication. Stimulates the 5'-3' DNA helicase activity of DnaB. The protein is DNA primase of Helicobacter pylori (strain ATCC 700392 / 26695) (Campylobacter pylori).